The sequence spans 114 residues: Ribonuclease P protein component (114 aa).

The protein belongs to the RnpA family. Consists of a catalytic RNA component (M1 or rnpB) and a protein subunit.

The enzyme catalyses Endonucleolytic cleavage of RNA, removing 5'-extranucleotides from tRNA precursor.. Functionally, RNaseP catalyzes the removal of the 5'-leader sequence from pre-tRNA to produce the mature 5'-terminus. It can also cleave other RNA substrates such as 4.5S RNA. The protein component plays an auxiliary but essential role in vivo by binding to the 5'-leader sequence and broadening the substrate specificity of the ribozyme. In Legionella pneumophila (strain Lens), this protein is Ribonuclease P protein component.